The chain runs to 132 residues: Holo-[acyl-carrier-protein] synthase (132 aa).

Residues D8 and E62 each coordinate Mg(2+).

Belongs to the P-Pant transferase superfamily. AcpS family. The cofactor is Mg(2+).

The protein resides in the cytoplasm. It carries out the reaction apo-[ACP] + CoA = holo-[ACP] + adenosine 3',5'-bisphosphate + H(+). Functionally, transfers the 4'-phosphopantetheine moiety from coenzyme A to a Ser of acyl-carrier-protein. The protein is Holo-[acyl-carrier-protein] synthase of Methylibium petroleiphilum (strain ATCC BAA-1232 / LMG 22953 / PM1).